The following is a 256-amino-acid chain: MGTDLWVGTWRPHRPRGPIAAFYSSPGPKYSLPGNTGFVSHDPSRHRAPAYSMGNRRFKLVDDCSPGPGYLVPSNITVKGKDGTPAYSIYGRPRDISSFRTPGPGSYSPERAGKSAYRSAPTYSLGERTKTFGNDQTPGPAAYMLPSVIGPRIVNRSSAPNYSMTGRSKIGSFHEDLQKTPGPGTYRVIDPGTYKHKPPQYSMTARNVLPGDTTIKPGPGAYSPEKVVMSKAQAPNFSFGIRHSEYVAPLIVDVAD.

STPGR repeat units lie at residues 66–92 (PGPGYLVPSNITVKGKDGTPAYSIYGR), 181–206 (PGPGTYRVIDPGTYKHKPPQYSMTAR), and 217–242 (PGPGAYSPEKVVMSKAQAPNFSFGIR). The disordered stretch occupies residues 91 to 115 (GRPRDISSFRTPGPGSYSPERAGKS).

This sequence belongs to the CIMAP family.

It is found in the cytoplasm. It localises to the cytoskeleton. The protein localises to the flagellum axoneme. In terms of biological role, outer dense fibers are filamentous structures located on the outside of the axoneme in the midpiece and principal piece of the mammalian sperm tail. May help to maintain the passive elastic structures and elastic recoil of the sperm tail. This Xenopus laevis (African clawed frog) protein is Ciliary microtubule associated protein 1A (cimap1a).